A 147-amino-acid polypeptide reads, in one-letter code: Hemoglobin subunit beta (147 aa).

Val-2 is subject to N-acetylvaline. The 145-residue stretch at 3-147 (HLTGEEKAAV…VANALAHKYH (145 aa)) folds into the Globin domain. Position 13 is a phosphothreonine (Thr-13). The residue at position 45 (Ser-45) is a Phosphoserine. Position 60 is an N6-acetyllysine (Lys-60). His-64 contacts heme b. Lys-83 bears the N6-acetyllysine mark. His-93 is a binding site for heme b. Residue Cys-94 is modified to S-nitrosocysteine. Lys-145 is subject to N6-acetyllysine.

The protein belongs to the globin family. In terms of assembly, heterotetramer of two alpha chains and two beta chains. Red blood cells.

Involved in oxygen transport from the lung to the various peripheral tissues. The protein is Hemoglobin subunit beta (HBB) of Ateles belzebuth (White-bellied spider monkey).